Reading from the N-terminus, the 186-residue chain is Thiol:disulfide interchange protein CycY (186 aa).

The first 20 residues, 1–20 (MGRYTLALLPLIVFGGIAHG), serve as a signal peptide directing secretion. The region spanning 47–182 (DAEPAAARRA…LVPAMEKALG (136 aa)) is the Thioredoxin domain. The cysteines at positions 80 and 83 are disulfide-linked.

It belongs to the thioredoxin family. DsbE subfamily.

The protein localises to the periplasm. Its function is as follows. Required for disulfide bond formation in some periplasmic proteins. Also acts as a disulfide oxidoreductase in cytochromes c biogenesis. The cysteines of apocytochromes c must be in the reduced state for covalent linkage between the two moieties to occur. This Rhizobium leguminosarum bv. viciae protein is Thiol:disulfide interchange protein CycY (cycY).